A 304-amino-acid polypeptide reads, in one-letter code: GTP cyclohydrolase FolE2 (304 aa).

Belongs to the GTP cyclohydrolase IV family.

The catalysed reaction is GTP + H2O = 7,8-dihydroneopterin 3'-triphosphate + formate + H(+). It functions in the pathway cofactor biosynthesis; 7,8-dihydroneopterin triphosphate biosynthesis; 7,8-dihydroneopterin triphosphate from GTP: step 1/1. Functionally, converts GTP to 7,8-dihydroneopterin triphosphate. This chain is GTP cyclohydrolase FolE2, found in Hahella chejuensis (strain KCTC 2396).